Here is a 431-residue protein sequence, read N- to C-terminus: Aspartokinase (431 aa).

Belongs to the aspartokinase family.

The catalysed reaction is L-aspartate + ATP = 4-phospho-L-aspartate + ADP. It participates in amino-acid biosynthesis; L-lysine biosynthesis via DAP pathway; (S)-tetrahydrodipicolinate from L-aspartate: step 1/4. It functions in the pathway amino-acid biosynthesis; L-methionine biosynthesis via de novo pathway; L-homoserine from L-aspartate: step 1/3. Its pathway is amino-acid biosynthesis; L-threonine biosynthesis; L-threonine from L-aspartate: step 1/5. The chain is Aspartokinase (lysC) from Chlamydia trachomatis serovar D (strain ATCC VR-885 / DSM 19411 / UW-3/Cx).